Here is a 274-residue protein sequence, read N- to C-terminus: Penicillin-insensitive murein endopeptidase (274 aa).

The N-terminal stretch at 1-19 (MKKTAIALLAWFVSSASLA) is a signal peptide. 3 disulfide bridges follow: C44/C265, C187/C235, and C216/C223. 6 residues coordinate Zn(2+): H110, H113, D120, D147, H150, and H211. The disordered stretch occupies residues 225-274 (DQPLPPPGDGCGAELQSWFEPPKPGTTKPEKKTPPPLPPSCQALLDEHVL).

The protein belongs to the peptidase M74 family. Dimer. Zn(2+) is required as a cofactor.

It localises to the periplasm. Murein endopeptidase that cleaves the D-alanyl-meso-2,6-diamino-pimelyl amide bond that connects peptidoglycan strands. Likely plays a role in the removal of murein from the sacculus. This is Penicillin-insensitive murein endopeptidase from Salmonella paratyphi A (strain AKU_12601).